A 111-amino-acid polypeptide reads, in one-letter code: uncharacterized protein (111 aa).

A run of 2 helical transmembrane segments spans residues 45 to 65 (AFLI…LLVI) and 91 to 111 (LPAG…ILHI).

The protein resides in the cell membrane. This is an uncharacterized protein from Methanothermobacter thermautotrophicus (strain ATCC 29096 / DSM 1053 / JCM 10044 / NBRC 100330 / Delta H) (Methanobacterium thermoautotrophicum).